A 248-amino-acid chain; its full sequence is Small ribosomal subunit protein uS5 (248 aa).

Residues methionine 1–aspartate 87 form a disordered region. The segment covering serine 8–serine 23 has biased composition (low complexity). Residues valine 57–aspartate 87 are compositionally biased toward basic and acidic residues. Positions tyrosine 94 to valine 157 constitute an S5 DRBM domain.

Belongs to the universal ribosomal protein uS5 family. In terms of assembly, part of the 30S ribosomal subunit. Contacts proteins S4 and S8.

Functionally, with S4 and S12 plays an important role in translational accuracy. In terms of biological role, located at the back of the 30S subunit body where it stabilizes the conformation of the head with respect to the body. The sequence is that of Small ribosomal subunit protein uS5 from Mycoplasmopsis synoviae (strain 53) (Mycoplasma synoviae).